Reading from the N-terminus, the 236-residue chain is Rho-related GTP-binding protein RhoV (236 aa).

The interval 1-27 is disordered; the sequence is MPPRELSEAEPPPLRAPTPPPRRRSAP. The segment covering 10 to 20 has biased composition (pro residues); the sequence is EPPPLRAPTPP. Ser25 carries the post-translational modification Phosphoserine. GTP contacts are provided by residues 38-45, 85-89, and 143-146; these read GDGAVGKS, DTAGQ, and TQAD. Cys234 is lipidated: S-palmitoyl cysteine.

This sequence belongs to the small GTPase superfamily. Rho family. Interacts with PAK2. It depends on Mg(2+) as a cofactor. Highly expressed in pancreas, placenta, and fetal brain.

Its subcellular location is the cell membrane. The protein resides in the endosome membrane. Plays a role in the control of the actin cytoskeleton via activation of the JNK pathway. This is Rho-related GTP-binding protein RhoV from Homo sapiens (Human).